The primary structure comprises 434 residues: Putative F-box/FBD/LRR-repeat protein At1g16940 (434 aa).

Residues 10 to 66 (HNIINQLPDSLLCEIFFNLPTEEVVKTSLICRRWRYVWQSLPGLDLVINGSKNYDKF) enclose the F-box domain. 6 LRR repeats span residues 72–99 (FMFLQRVKLRYVGYGHNCRNMTSMMMNN), 114–141 (RRYVYDRVEIPPTIYTSCERLVFLKLHR), 164–189 (INFVDSLDMEKLVSVCPALETLTMDK), 204–231 (CLTNNETGYLKTQVVMQTPKLKYLKLNR), 252–277 (DVAYFGETLLSILKLISCVRDLTISF), and 306–331 (MAVGSWESLLIFLESCQNLKSLVMGF). Residues 336–385 (WGINFSDVPQCVLSSLEFVEVKAREVADMKKLWSYFMENSTVLKKFTLCL) form the FBD domain.

The polypeptide is Putative F-box/FBD/LRR-repeat protein At1g16940 (Arabidopsis thaliana (Mouse-ear cress)).